Reading from the N-terminus, the 1025-residue chain is Beta-galactosidase (1025 aa).

Asn103 and Asp202 together coordinate substrate. Asp202 serves as a coordination point for Na(+). Residues Glu417, His419, and Glu462 each contribute to the Mg(2+) site. Residues Glu462 and 538-541 (EYAH) each bind substrate. Catalysis depends on Glu462, which acts as the Proton donor. Glu538 (nucleophile) is an active-site residue. Residue Asn598 coordinates Mg(2+). Phe602 and Asn605 together coordinate Na(+). Substrate is bound by residues Asn605 and Trp1003.

The protein belongs to the glycosyl hydrolase 2 family. In terms of assembly, homotetramer. Requires Mg(2+) as cofactor. The cofactor is Na(+).

The catalysed reaction is Hydrolysis of terminal non-reducing beta-D-galactose residues in beta-D-galactosides.. In Citrobacter koseri (strain ATCC BAA-895 / CDC 4225-83 / SGSC4696), this protein is Beta-galactosidase.